Consider the following 427-residue polypeptide: Adenylosuccinate synthetase (427 aa).

GTP is bound by residues 12 to 18 (GDEGKGK) and 40 to 42 (GHT). D13 (proton acceptor) is an active-site residue. Mg(2+) contacts are provided by D13 and G40. IMP is bound by residues 13-16 (DEGK), 38-41 (NAGH), T128, R142, Q223, T238, and R302. H41 (proton donor) is an active-site residue. 298–304 (TTTGRNR) contacts substrate. GTP is bound by residues R304, 330–332 (KLD), and 412–414 (GVG).

The protein belongs to the adenylosuccinate synthetase family. Homodimer. Mg(2+) serves as cofactor.

It localises to the cytoplasm. The enzyme catalyses IMP + L-aspartate + GTP = N(6)-(1,2-dicarboxyethyl)-AMP + GDP + phosphate + 2 H(+). The protein operates within purine metabolism; AMP biosynthesis via de novo pathway; AMP from IMP: step 1/2. Plays an important role in the de novo pathway of purine nucleotide biosynthesis. Catalyzes the first committed step in the biosynthesis of AMP from IMP. This Thermobifida fusca (strain YX) protein is Adenylosuccinate synthetase.